The chain runs to 342 residues: Gibberellin cluster GA4 desaturase (342 aa).

The interval 127 to 183 (PELAPPYPMPGKSSSGSKEREAIPANELPTTRAKGFQKGEEEGPVRKPHKDWGPSGA) is disordered.

It belongs to the asaB hydroxylase/desaturase family.

The protein operates within plant hormone biosynthesis; gibberellin biosynthesis. Functionally, GA4 desaturase; part of the gene cluster that mediates the biosynthesis of gibberellins (GAs), diterpenoids that may provide a selective advantage during infection of the preferred host plant, rice. Gibberellins (GAs) are diterpenoids and are synthesized via the mevalonate pathway. Biosynthesis of the major metabolite GA3 (gibberellic acid) from geranylgeranyl diphosphate (GGPP) requires 13 steps. The GGPP produced by the geranylgeranyl diphosphate synthase GGS2 is converted to ent-kaurene via ent-copalyldiphosphate in a two-step cyclization reaction performed by the bifunctional ent-copalyl diphosphate synthase/ent-kaurene synthase enzyme (CPS/KS). Ent-Kaurene is metabolized to GAs by a series of oxidation reactions catalyzed by cytochrome P450 monooxygenases. Cytochrome P450 monooxygenase P450-4 is an ent-kaurene oxidase that catalyzes the three oxidation steps between ent-kaurene and ent-kaurenoic acid. The highly multifunctional cytochrome P450 monooxygenase P450-1 then catalyzes four steps involving oxidation at two carbon atoms, in the main pathway from ent-kaurenoic acid to GA14 via GA12-aldehyde as well as producing kaurenolides and fujenoic acids as by-products. The cytochrome P450 monooxygenase P450-2 then converts GA14 to GA4 by removal of C-20. GA4 is further converted to GA7 by the GA4 desaturase DES via 1,2-desaturation before cytochrome P450 monooxygenase P450-3, a 13-hydroxylase, hydroxylates GA7 to GA3, the final product of the GA-biosynthetic pathway. This Gibberella fujikuroi (strain CBS 195.34 / IMI 58289 / NRRL A-6831) (Bakanae and foot rot disease fungus) protein is Gibberellin cluster GA4 desaturase.